We begin with the raw amino-acid sequence, 407 residues long: Phosphonoacetate hydrolase (407 aa).

The Zn(2+) site is built by aspartate 25, threonine 64, aspartate 202, histidine 206, aspartate 241, histidine 242, and histidine 368. 2 residues coordinate substrate: threonine 64 and aspartate 202. Histidine 242 and histidine 368 together coordinate substrate.

The protein belongs to the alkaline phosphatase family. PhnA subfamily. Homodimer. Zn(2+) serves as cofactor.

It carries out the reaction phosphonoacetate + H2O = acetate + phosphate + H(+). Specifically hydrolyzes phosphonoacetate. Does not have activity on other organophosphonates or acetates. This is Phosphonoacetate hydrolase from Pseudomonas putida (Arthrobacter siderocapsulatus).